Consider the following 323-residue polypeptide: Aspartate carbamoyltransferase catalytic subunit (323 aa).

Carbamoyl phosphate contacts are provided by Arg65 and Thr66. Position 93 (Lys93) interacts with L-aspartate. Carbamoyl phosphate-binding residues include Arg115, His149, and Gln152. L-aspartate is bound by residues Arg182 and Arg237. The carbamoyl phosphate site is built by Gly278 and Pro279.

It belongs to the aspartate/ornithine carbamoyltransferase superfamily. ATCase family. Heterododecamer (2C3:3R2) of six catalytic PyrB chains organized as two trimers (C3), and six regulatory PyrI chains organized as three dimers (R2).

The enzyme catalyses carbamoyl phosphate + L-aspartate = N-carbamoyl-L-aspartate + phosphate + H(+). Its pathway is pyrimidine metabolism; UMP biosynthesis via de novo pathway; (S)-dihydroorotate from bicarbonate: step 2/3. Functionally, catalyzes the condensation of carbamoyl phosphate and aspartate to form carbamoyl aspartate and inorganic phosphate, the committed step in the de novo pyrimidine nucleotide biosynthesis pathway. This is Aspartate carbamoyltransferase catalytic subunit from Aromatoleum aromaticum (strain DSM 19018 / LMG 30748 / EbN1) (Azoarcus sp. (strain EbN1)).